Consider the following 294-residue polypeptide: uncharacterized protein (294 aa).

Active-site charge relay system residues include Thr-43 and Tyr-104. The Proton donor role is filled by Tyr-130. Lys-158 (schiff-base intermediate with substrate) is an active-site residue.

The protein belongs to the DapA family. Homotetramer.

It localises to the cytoplasm. This is an uncharacterized protein from Pyrococcus abyssi (strain GE5 / Orsay).